Reading from the N-terminus, the 595-residue chain is Aspartate--tRNA(Asp/Asn) ligase (595 aa).

Glu174 is a binding site for L-aspartate. The aspartate stretch occupies residues 198-201 (QLFK). Arg220 serves as a coordination point for L-aspartate. ATP-binding positions include 220–222 (RDE) and Gln229. Position 452 (His452) interacts with L-aspartate. Glu486 contributes to the ATP binding site. Arg493 contacts L-aspartate. 538 to 541 (GLDR) is a binding site for ATP.

It belongs to the class-II aminoacyl-tRNA synthetase family. Type 1 subfamily. As to quaternary structure, homodimer.

Its subcellular location is the cytoplasm. It carries out the reaction tRNA(Asx) + L-aspartate + ATP = L-aspartyl-tRNA(Asx) + AMP + diphosphate. In terms of biological role, aspartyl-tRNA synthetase with relaxed tRNA specificity since it is able to aspartylate not only its cognate tRNA(Asp) but also tRNA(Asn). Reaction proceeds in two steps: L-aspartate is first activated by ATP to form Asp-AMP and then transferred to the acceptor end of tRNA(Asp/Asn). The protein is Aspartate--tRNA(Asp/Asn) ligase of Nitrosococcus oceani (strain ATCC 19707 / BCRC 17464 / JCM 30415 / NCIMB 11848 / C-107).